A 1314-amino-acid polypeptide reads, in one-letter code: E3 ubiquitin-protein ligase RNF123 (1314 aa).

A2 is modified (N-acetylalanine). Residues 74–254 form the B30.2/SPRY domain; the sequence is VDSEDEESQG…VAFNFGSRPL (181 aa). The interval 460–481 is disordered; the sequence is HRSSREGKDSAEDRAEAAEERP. The segment covering 462-481 has biased composition (basic and acidic residues); the sequence is SSREGKDSAEDRAEAAEERP. The residue at position 675 (S675) is a Phosphoserine. R683 carries the asymmetric dimethylarginine modification. The tract at residues 968-974 is interaction with NFKB1; sequence WILVRLW. Positions 1254, 1257, 1269, 1271, 1274, 1277, 1288, and 1291 each coordinate Zn(2+). An RING-type zinc finger spans residues 1254–1292; the sequence is CPICYAHPISAVFQPCGHKSCKACIDQHLMNNKDCFFCK.

Component of the KPC complex composed of RNF123/KPC1 and UBAC1/KPC2. Interacts with UBAC1 and CDKN1B via its N-terminal domain. Interacts with RIGI (via N-terminus) and IFIH1 (via N-terminus). In terms of processing, ubiquitinated, leading to its degradation. Deubiquitinated by USP19, thereby stimulating CDKN1B ubiquitin-dependent degradation.

The protein resides in the cytoplasm. The enzyme catalyses S-ubiquitinyl-[E2 ubiquitin-conjugating enzyme]-L-cysteine + [acceptor protein]-L-lysine = [E2 ubiquitin-conjugating enzyme]-L-cysteine + N(6)-ubiquitinyl-[acceptor protein]-L-lysine.. The protein operates within protein modification; protein ubiquitination. In terms of biological role, catalytic subunit of the KPC complex that acts as E3 ubiquitin-protein ligase. Promotes the ubiquitination and proteasome-mediated degradation of CDKN1B which is the cyclin-dependent kinase inhibitor at the G0-G1 transition of the cell cycle. Also acts as a key regulator of the NF-kappa-B signaling by promoting maturation of the NFKB1 component of NF-kappa-B. Acts by catalyzing ubiquitination of the NFKB1 p105 precursor, leading to limited proteasomal degradation of NFKB1 p105 and generation of the active NFKB1 p50 subunit. Functions also as an inhibitor of innate antiviral signaling mediated by RIGI and IFIH1 independently of its E3 ligase activity. Interacts with the N-terminal CARD domains of RIGI and IFIH1 and competes with the downstream adapter MAVS. The chain is E3 ubiquitin-protein ligase RNF123 from Oryctolagus cuniculus (Rabbit).